Reading from the N-terminus, the 116-residue chain is Ferredoxin-thioredoxin reductase, catalytic chain (116 aa).

Position 57 (C57) interacts with [4Fe-4S] cluster. C59 acts as the Nucleophile in catalysis. C59 and C89 are disulfide-bonded. The [4Fe-4S] cluster site is built by C76, C78, and C87.

The protein belongs to the ferredoxin thioredoxin reductase beta subunit family. Heterodimer of subunit A (variable subunit) and subunit B (catalytic subunit). Heterodimeric FTR forms a complex with ferredoxin and thioredoxin. [4Fe-4S] cluster serves as cofactor.

It is found in the plastid. The protein localises to the chloroplast. The enzyme catalyses [thioredoxin]-disulfide + 2 reduced [2Fe-2S]-[ferredoxin] + 2 H(+) = [thioredoxin]-dithiol + 2 oxidized [2Fe-2S]-[ferredoxin]. Functionally, catalytic subunit of the ferredoxin-thioredoxin reductase (FTR), which catalyzes the two-electron reduction of thioredoxins by the electrons provided by reduced ferredoxin. This chain is Ferredoxin-thioredoxin reductase, catalytic chain (ftrB), found in Pyropia yezoensis (Susabi-nori).